Consider the following 121-residue polypeptide: Phosphoribosyl-ATP pyrophosphatase (121 aa).

This sequence belongs to the PRA-PH family.

Its subcellular location is the cytoplasm. It carries out the reaction 1-(5-phospho-beta-D-ribosyl)-ATP + H2O = 1-(5-phospho-beta-D-ribosyl)-5'-AMP + diphosphate + H(+). Its pathway is amino-acid biosynthesis; L-histidine biosynthesis; L-histidine from 5-phospho-alpha-D-ribose 1-diphosphate: step 2/9. This chain is Phosphoribosyl-ATP pyrophosphatase, found in Burkholderia ambifaria (strain MC40-6).